Here is a 642-residue protein sequence, read N- to C-terminus: Threonine--tRNA ligase (642 aa).

In terms of domain architecture, TGS spans 1–61 (MPVITLPDGS…DTDSELSIIT (61 aa)). The tract at residues 243 to 534 (DHRKIGKQLD…LIEEYAGKFP (292 aa)) is catalytic. Zn(2+) contacts are provided by Cys-334, His-385, and His-511.

The protein belongs to the class-II aminoacyl-tRNA synthetase family. Homodimer. It depends on Zn(2+) as a cofactor.

Its subcellular location is the cytoplasm. It carries out the reaction tRNA(Thr) + L-threonine + ATP = L-threonyl-tRNA(Thr) + AMP + diphosphate + H(+). Functionally, catalyzes the attachment of threonine to tRNA(Thr) in a two-step reaction: L-threonine is first activated by ATP to form Thr-AMP and then transferred to the acceptor end of tRNA(Thr). Also edits incorrectly charged L-seryl-tRNA(Thr). In Shewanella sediminis (strain HAW-EB3), this protein is Threonine--tRNA ligase.